Here is a 341-residue protein sequence, read N- to C-terminus: Ferrochelatase (341 aa).

Residues His189 and Glu293 each coordinate Fe cation.

This sequence belongs to the ferrochelatase family.

It is found in the cytoplasm. It catalyses the reaction heme b + 2 H(+) = protoporphyrin IX + Fe(2+). It functions in the pathway porphyrin-containing compound metabolism; protoheme biosynthesis; protoheme from protoporphyrin-IX: step 1/1. Its function is as follows. Catalyzes the ferrous insertion into protoporphyrin IX. In Pseudomonas fluorescens (strain SBW25), this protein is Ferrochelatase.